The sequence spans 137 residues: Methylglyoxal synthase (137 aa).

Residues 1–137 (MNIALVAHDK…KLSHNDEPPA (137 aa)) enclose the MGS-like domain. Residues histidine 8, lysine 12, 34–37 (TGTT), and 54–55 (SG) each bind substrate. The active-site Proton donor/acceptor is aspartate 60. Position 87 (histidine 87) interacts with substrate.

It belongs to the methylglyoxal synthase family.

It catalyses the reaction dihydroxyacetone phosphate = methylglyoxal + phosphate. Catalyzes the formation of methylglyoxal from dihydroxyacetone phosphate. This is Methylglyoxal synthase from Exiguobacterium sp. (strain ATCC BAA-1283 / AT1b).